Reading from the N-terminus, the 369-residue chain is uncharacterized protein (369 aa).

Residue lysine 184 is modified to N6-(pyridoxal phosphate)lysine.

The protein belongs to the class-V pyridoxal-phosphate-dependent aminotransferase family. Pyridoxal 5'-phosphate is required as a cofactor.

This is an uncharacterized protein from Helicobacter pylori (strain ATCC 700392 / 26695) (Campylobacter pylori).